A 360-amino-acid chain; its full sequence is Phenylalanine--tRNA ligase alpha subunit (360 aa).

Residue Glu-260 coordinates Mg(2+).

Belongs to the class-II aminoacyl-tRNA synthetase family. Phe-tRNA synthetase alpha subunit type 1 subfamily. Tetramer of two alpha and two beta subunits. It depends on Mg(2+) as a cofactor.

It is found in the cytoplasm. It carries out the reaction tRNA(Phe) + L-phenylalanine + ATP = L-phenylalanyl-tRNA(Phe) + AMP + diphosphate + H(+). The chain is Phenylalanine--tRNA ligase alpha subunit from Cereibacter sphaeroides (strain ATCC 17029 / ATH 2.4.9) (Rhodobacter sphaeroides).